Consider the following 283-residue polypeptide: Formamidopyrimidine-DNA glycosylase (283 aa).

Pro2 (schiff-base intermediate with DNA) is an active-site residue. Catalysis depends on Glu3, which acts as the Proton donor. Lys58 (proton donor; for beta-elimination activity) is an active-site residue. Residues His100, Arg119, and Arg162 each contribute to the DNA site. The FPG-type zinc finger occupies 247–283 (RVYGREGLPCVTPGCSGTVGRIVQSGRSSFHCPLCQR). Residue Arg273 is the Proton donor; for delta-elimination activity of the active site.

It belongs to the FPG family. As to quaternary structure, monomer. It depends on Zn(2+) as a cofactor.

It catalyses the reaction Hydrolysis of DNA containing ring-opened 7-methylguanine residues, releasing 2,6-diamino-4-hydroxy-5-(N-methyl)formamidopyrimidine.. The enzyme catalyses 2'-deoxyribonucleotide-(2'-deoxyribose 5'-phosphate)-2'-deoxyribonucleotide-DNA = a 3'-end 2'-deoxyribonucleotide-(2,3-dehydro-2,3-deoxyribose 5'-phosphate)-DNA + a 5'-end 5'-phospho-2'-deoxyribonucleoside-DNA + H(+). Involved in base excision repair of DNA damaged by oxidation or by mutagenic agents. Acts as a DNA glycosylase that recognizes and removes damaged bases. Has a preference for oxidized purines, such as 7,8-dihydro-8-oxoguanine (8-oxoG). Has AP (apurinic/apyrimidinic) lyase activity and introduces nicks in the DNA strand. Cleaves the DNA backbone by beta-delta elimination to generate a single-strand break at the site of the removed base with both 3'- and 5'-phosphates. This is Formamidopyrimidine-DNA glycosylase from Cereibacter sphaeroides (strain KD131 / KCTC 12085) (Rhodobacter sphaeroides).